A 663-amino-acid polypeptide reads, in one-letter code: MGAVSRDDYIALCTELVEHDRCYYVLNQPTISDYSYDVKMRELQEIEVQHPEWKVSWSPTMYLGDRPSGQFPVVPHSSPMLSIANVYSLQELEEFFSRTEKLLGYSPGYSLELKIDGIAVAIRYEKRLFAQALSRGNGVKGEDITANVSTIRSLPMRLPQEAPEDLEVRGEVFLSYEAFEELNACQREQGKLEFANPRNAAGGTLKLLSSKEAAKRKLDLSVYGLITDQKKRSHFENLQLCSQWGFFVAGMPKQCRSRQEVVERIREIEEMRAALPMAIDGVVIKVDNIAHQDRLGLTSKHYRWAIAYKYAPERAETILEDIVVQVGKTGILTPVAELAPVFLSGSRVSRASLYNQDEIEKKDIRIGDSVYVEKGGEVIPKIVGINLAKRSLESEPWKMPSLCPVCHEPVVKEKVSVRCINPLCSGGMLEKICFFASKSALNIDHLGEKVVTKLFEVGLISSCSDIFALTEEDLKQVPGFKDRSIQNLLASIAGAKKVALDRLLTALSIPFVGSSGAIALADHFVTLDKVIEASLDELMSIEGIGPKVAASIVAFFSKHENREEIRRMQELGVQVLSKQSDKEAPLQGKVFVLTGTLQQMTRTQAEERIRSLGGKVSSSVSKSTYAVIAGSEAGGKLKKAQDLGLSIWNESELLRILDAKSVS.

NAD(+) is bound by residues 33-37 (DYSYD), 82-83 (SI), and glutamate 112. Lysine 114 acts as the N6-AMP-lysine intermediate in catalysis. NAD(+)-binding residues include arginine 135, glutamate 171, lysine 285, and lysine 309. Positions 403, 406, 419, and 424 each coordinate Zn(2+). The BRCT domain occupies 581-663 (DKEAPLQGKV…LRILDAKSVS (83 aa)).

This sequence belongs to the NAD-dependent DNA ligase family. LigA subfamily. Mg(2+) is required as a cofactor. Mn(2+) serves as cofactor.

It catalyses the reaction NAD(+) + (deoxyribonucleotide)n-3'-hydroxyl + 5'-phospho-(deoxyribonucleotide)m = (deoxyribonucleotide)n+m + AMP + beta-nicotinamide D-nucleotide.. DNA ligase that catalyzes the formation of phosphodiester linkages between 5'-phosphoryl and 3'-hydroxyl groups in double-stranded DNA using NAD as a coenzyme and as the energy source for the reaction. It is essential for DNA replication and repair of damaged DNA. This is DNA ligase from Chlamydia trachomatis serovar A (strain ATCC VR-571B / DSM 19440 / HAR-13).